The sequence spans 446 residues: Glutamate--tRNA ligase 2 (446 aa).

The 'HIGH' region signature appears at 8–18 (PSPTGYLHIGN). The 'KMSKS' region motif lies at 239-243 (GLSKR). An ATP-binding site is contributed by Lys242.

This sequence belongs to the class-I aminoacyl-tRNA synthetase family. Glutamate--tRNA ligase type 1 subfamily. As to quaternary structure, monomer.

It localises to the cytoplasm. The enzyme catalyses tRNA(Glu) + L-glutamate + ATP = L-glutamyl-tRNA(Glu) + AMP + diphosphate. Catalyzes the attachment of glutamate to tRNA(Glu) in a two-step reaction: glutamate is first activated by ATP to form Glu-AMP and then transferred to the acceptor end of tRNA(Glu). This Methylobacterium radiotolerans (strain ATCC 27329 / DSM 1819 / JCM 2831 / NBRC 15690 / NCIMB 10815 / 0-1) protein is Glutamate--tRNA ligase 2.